Reading from the N-terminus, the 3396-residue chain is Versican core protein (3396 aa).

A signal peptide spans 1–20; it reads MFINIKSILWMCSTLIVTHA. In terms of domain architecture, Ig-like V-type spans 21 to 146; sequence LHKVKVGKSP…EDTQDTVSLT (126 aa). Intrachain disulfides connect cysteine 44/cysteine 130, cysteine 172/cysteine 243, cysteine 196/cysteine 217, cysteine 270/cysteine 345, and cysteine 294/cysteine 315. Asparagine 57 is a glycosylation site (N-linked (GlcNAc...) asparagine). Link domains follow at residues 150-245 and 251-347; these read VVFH…YCYV and DVFH…YCFK. N-linked (GlcNAc...) asparagine glycosylation occurs at asparagine 330. Residues 348 to 1335 form a GAG-alpha (glucosaminoglycan attachment domain) region; sequence PKEATTIDLS…IIEVRENKTG (988 aa). The segment covering 420–430 has biased composition (polar residues); sequence ATKLPTPTGST. 2 disordered regions span residues 420-439 and 603-622; these read ATKL…MDDY and STTV…MDDW. A glycan (N-linked (GlcNAc...) asparagine) is linked at asparagine 615. An O-linked (Xyl...) (chondroitin sulfate) serine glycan is attached at serine 659. Residues asparagine 782 and asparagine 809 are each glycosylated (N-linked (GlcNAc...) asparagine). 3 disordered regions span residues 807-829, 1126-1154, and 1277-1316; these read EDNT…LPPA, IGPK…TSSL, and REYF…PAST. Residues 811–824 show a composition bias toward polar residues; that stretch reads TSKPLESTEPSASS. Over residues 1143-1154 the composition is skewed to low complexity; the sequence is EGSSTTGFTSSL. N-linked (GlcNAc...) asparagine glycans are attached at residues asparagine 1332 and asparagine 1398. A GAG-beta region spans residues 1336-3089; that stretch reads RMSDLSVIGH…VEGTAIYLPG (1754 aa). 2 disordered regions span residues 1420 to 1497 and 1510 to 1539; these read VPKD…SGGE and FESG…HTEP. The span at 1422–1433 shows a compositional bias: basic and acidic residues; it reads KDPEAAEARRGQ. N-linked (GlcNAc...) asparagine glycosylation is found at asparagine 1442 and asparagine 1468. Over residues 1469–1480 the composition is skewed to low complexity; the sequence is ESTETTESLEVT. Residues 1517 to 1538 are compositionally biased toward basic and acidic residues; sequence KGAESVTERDTEVGHQAHEHTE. O-linked (Xyl...) (chondroitin sulfate) serine glycosylation is found at serine 1548 and serine 1631. Asparagine 1663 is a glycosylation site (N-linked (GlcNAc...) asparagine). Disordered regions lie at residues 1717–1737 and 1759–1789; these read STTV…TAST and PNVA…MTDS. Over residues 1720–1729 the composition is skewed to basic and acidic residues; the sequence is VEEKKRKEEE. The segment covering 1760-1781 has biased composition (polar residues); the sequence is NVATSSDSGTRKSFMSLTTPTQ. N-linked (GlcNAc...) asparagine glycosylation is present at asparagine 1898. Residues serine 1935 and serine 1959 are each glycosylated (O-linked (Xyl...) (chondroitin sulfate) serine). 3 disordered regions span residues 1962-1994, 2107-2134, and 2168-2188; these read AAFR…STMV, RQEI…NSPA, and KEMK…PDAN. Residues 1969–1978 are compositionally biased toward low complexity; sequence TSPSTVPTSV. The segment covering 2111-2120 has biased composition (acidic residues); it reads ESETTSEEQI. Serine 2116 carries the post-translational modification Phosphoserine; by FAM20C. Asparagine 2179 is a glycosylation site (N-linked (GlcNAc...) asparagine). O-linked (Xyl...) (chondroitin sulfate) serine glycans are attached at residues serine 2247 and serine 2254. 5 N-linked (GlcNAc...) asparagine glycosylation sites follow: asparagine 2272, asparagine 2280, asparagine 2360, asparagine 2385, and asparagine 2392. Disordered regions lie at residues 2371 to 2396, 2445 to 2473, 2493 to 2518, and 2598 to 2617; these read TSRP…ETTT, SATT…EVPS, SEQN…STDG, and DTEV…DDST. Polar residues-rich tracts occupy residues 2445–2461 and 2496–2513; these read SATT…TFVS and NKSS…VSYE. N-linked (GlcNAc...) asparagine glycosylation is present at asparagine 2496. Serine 2608 carries the post-translational modification Phosphoserine. Threonine 2617 is modified (phosphothreonine). Asparagine 2628 carries an N-linked (GlcNAc...) asparagine glycan. Serine 2722, serine 2723, and serine 2767 each carry an O-linked (Xyl...) (chondroitin sulfate) serine glycan. 2 disordered regions span residues 2834-2856 and 2881-2905; these read GSEA…DVGS and EEYL…EDDG. Positions 2896–2905 are enriched in basic and acidic residues; it reads TKLEPSEDDG. Asparagine 2934 is a glycosylation site (N-linked (GlcNAc...) asparagine). Residue serine 2941 is glycosylated (O-linked (Xyl...) (chondroitin sulfate) serine). A glycan (N-linked (GlcNAc...) asparagine) is linked at asparagine 3067. The EGF-like 1 domain maps to 3089–3125; it reads GPDRCKMNPCLNGGTCYPTETSYVCTCVPGYSGDQCE. 11 disulfide bridges follow: cysteine 3093–cysteine 3104, cysteine 3098–cysteine 3113, cysteine 3115–cysteine 3124, cysteine 3131–cysteine 3142, cysteine 3136–cysteine 3151, cysteine 3153–cysteine 3162, cysteine 3169–cysteine 3180, cysteine 3197–cysteine 3289, cysteine 3265–cysteine 3281, cysteine 3296–cysteine 3339, and cysteine 3325–cysteine 3352. An EGF-like 2; calcium-binding domain is found at 3127 to 3163; that stretch reads DFDECHSNPCRNGATCVDGFNTFRCLCLPSYVGALCE. Residues 3176–3290 enclose the C-type lectin domain; that stretch reads FQGQCYKYFA…CNYHLTYTCK (115 aa). The Sushi domain occupies 3294–3354; that stretch reads VACGQPPVVE…WAIPKITCMN (61 aa). Residues asparagine 3369 and asparagine 3379 are each glycosylated (N-linked (GlcNAc...) asparagine). The span at 3371–3380 shows a compositional bias: polar residues; sequence SSAKDNSINT. Residues 3371 to 3396 form a disordered region; sequence SSAKDNSINTSKHDHRWSRRWQESRR.

This sequence belongs to the aggrecan/versican proteoglycan family. As to quaternary structure, interacts with FBLN1. Phosphorylated by FAM20C in the extracellular medium. In terms of processing, proteolytically cleaved by ADAMTS5 and ADAMTS15 in the pericellular matrix surrounding myoblasts, facilitating myoblast contact and fusion which is required for skeletal muscle development and regeneration. Detected in placenta (at protein level). Detected in cerebrospinal fluid, fibroblasts and urine (at protein level). Expressed in the retina (at protein level). Cerebral white matter and plasma. Isoform V0: Expressed in normal brain, gliomas, medulloblastomas, schwannomas, neurofibromas, and meningiomas. Isoform V1: Expressed in normal brain, gliomas, medulloblastomas, schwannomas, neurofibromas, and meningiomas. Isoform V2: Restricted to normal brain and gliomas. Isoform V3: Found in all these tissues except medulloblastomas.

It is found in the secreted. The protein localises to the extracellular space. It localises to the extracellular matrix. The protein resides in the cell projection. Its subcellular location is the cilium. It is found in the photoreceptor outer segment. The protein localises to the interphotoreceptor matrix. Its function is as follows. May play a role in intercellular signaling and in connecting cells with the extracellular matrix. May take part in the regulation of cell motility, growth and differentiation. Binds hyaluronic acid. This chain is Versican core protein (VCAN), found in Homo sapiens (Human).